The primary structure comprises 172 residues: Gamma-crystallin-4 (172 aa).

2 consecutive Beta/gamma crystallin 'Greek key' domains span residues 1 to 37 (IFFY…RVES) and 38 to 80 (GNWI…RFIP). A connecting peptide region spans residues 81–85 (HPHSQ). 2 Beta/gamma crystallin 'Greek key' domains span residues 86–126 (YKMR…NVSD) and 127–169 (GHWM…RRVH).

The protein belongs to the beta/gamma-crystallin family. In terms of assembly, monomer.

In terms of biological role, crystallins are the dominant structural components of the vertebrate eye lens. This chain is Gamma-crystallin-4 (cryg4), found in Xenopus laevis (African clawed frog).